The chain runs to 396 residues: uncharacterized protein (396 aa).

A run of 12 helical transmembrane segments spans residues 8 to 28 (TASG…ILAS), 44 to 64 (ISYV…ISGV), 73 to 93 (PLVV…PLSP), 97 to 117 (LAFV…AGTY), 133 to 153 (VLVK…ITFL), 158 to 178 (MFYG…IIYL), 213 to 233 (ALII…IWLP), 250 to 270 (LLSY…VLLN), 276 to 296 (VFIT…MLTV), 304 to 324 (ITAF…ITLM), 338 to 358 (IVAT…GLIA), and 363 to 383 (IAHI…AAAF).

The protein belongs to the major facilitator superfamily.

The protein resides in the cell membrane. This is an uncharacterized protein from Bacillus subtilis (strain 168).